Consider the following 413-residue polypeptide: Serpin A12 (413 aa).

The N-terminal stretch at 1–20 (MTRMLDLGLFLAGLLTVKGL) is a signal peptide. Residues Asn-92 and Asn-267 are each glycosylated (N-linked (GlcNAc...) asparagine). Positions 364-382 (GMEGAAGSGAQTLPMETPR) are reactive center loop.

This sequence belongs to the serpin family. As to quaternary structure, forms a stable complex with KLK7. Glycosylation slightly decreases affinity for heparin, but otherwise has no significant effect on KLK7 inhibitory activity or thermal stability of the protein. In terms of tissue distribution, expressed in visceral adipose tissues.

It is found in the secreted. Its activity is regulated as follows. Inhibition of KLK7 is enhanced by heparin. Its function is as follows. Adipokine that modulates insulin action by specifically inhibiting its target protease KLK7 in white adipose tissues. The polypeptide is Serpin A12 (Serpina12) (Mus musculus (Mouse)).